Here is a 329-residue protein sequence, read N- to C-terminus: Elongation factor Ts (329 aa).

Residues 79–82 (TDFV) form an involved in Mg(2+) ion dislocation from EF-Tu region.

Belongs to the EF-Ts family.

The protein localises to the cytoplasm. Its function is as follows. Associates with the EF-Tu.GDP complex and induces the exchange of GDP to GTP. It remains bound to the aminoacyl-tRNA.EF-Tu.GTP complex up to the GTP hydrolysis stage on the ribosome. This chain is Elongation factor Ts, found in Parabacteroides distasonis (strain ATCC 8503 / DSM 20701 / CIP 104284 / JCM 5825 / NCTC 11152).